We begin with the raw amino-acid sequence, 204 residues long: UPF0637 protein LMHCC_1566 (204 aa).

It belongs to the UPF0637 family.

This Listeria monocytogenes serotype 4a (strain HCC23) protein is UPF0637 protein LMHCC_1566.